The following is a 145-amino-acid chain: Large ribosomal subunit protein uL13 (145 aa).

Belongs to the universal ribosomal protein uL13 family. In terms of assembly, part of the 50S ribosomal subunit.

Functionally, this protein is one of the early assembly proteins of the 50S ribosomal subunit, although it is not seen to bind rRNA by itself. It is important during the early stages of 50S assembly. In Listeria monocytogenes serotype 4b (strain CLIP80459), this protein is Large ribosomal subunit protein uL13.